Here is a 291-residue protein sequence, read N- to C-terminus: Probable L-ascorbate peroxidase 4, peroxisomal (291 aa).

The active-site Proton acceptor is His40. A heme b-binding site is contributed by His160. K(+) contacts are provided by Thr161, Thr177, and Asp184. A helical transmembrane segment spans residues 263-283 (VLAQSAVGVAVAAAVVIVSYL).

It belongs to the peroxidase family. Ascorbate peroxidase subfamily. Heme b is required as a cofactor. Expressed in leaves, stems and flowers.

The protein localises to the peroxisome membrane. The catalysed reaction is L-ascorbate + H2O2 = L-dehydroascorbate + 2 H2O. Plays a key role in hydrogen peroxide removal. This Oryza sativa subsp. japonica (Rice) protein is Probable L-ascorbate peroxidase 4, peroxisomal.